Here is a 275-residue protein sequence, read N- to C-terminus: Lectin DB58 (275 aa).

An N-terminal signal peptide occupies residues 1–22 (MASSTVSVVLSLFLLLLTQAYS). Residues Asn34 and Asn101 are each glycosylated (N-linked (GlcNAc...) asparagine).

The protein belongs to the leguminous lectin family. As to quaternary structure, heterodimer, composed of an alpha and a beta subunit derived from a single precursor. In terms of processing, leu-264 is missing in a major portion of the beta subunit, suggesting an origin by sequential removal of amino acids rather than a processing by endoproteolytic cleavage.

Functionally, metalloglycoprotein, containing Ca, Mg, Mn, and Zn and the carbohydrates galactose, glucosamine, mannose, and fucose. It agglutinates erythrocytes of blood group A1. This chain is Lectin DB58, found in Vigna unguiculata subsp. cylindrica (Horse gram).